Consider the following 72-residue polypeptide: Translation initiation factor IF-1 (72 aa).

Positions 1-72 constitute an S1-like domain; that stretch reads MSKEDSFEME…SKGRITYRAR (72 aa).

Belongs to the IF-1 family. In terms of assembly, component of the 30S ribosomal translation pre-initiation complex which assembles on the 30S ribosome in the order IF-2 and IF-3, IF-1 and N-formylmethionyl-tRNA(fMet); mRNA recruitment can occur at any time during PIC assembly.

Its subcellular location is the cytoplasm. Functionally, one of the essential components for the initiation of protein synthesis. Stabilizes the binding of IF-2 and IF-3 on the 30S subunit to which N-formylmethionyl-tRNA(fMet) subsequently binds. Helps modulate mRNA selection, yielding the 30S pre-initiation complex (PIC). Upon addition of the 50S ribosomal subunit IF-1, IF-2 and IF-3 are released leaving the mature 70S translation initiation complex. The polypeptide is Translation initiation factor IF-1 (Pseudomonas syringae pv. tomato (strain ATCC BAA-871 / DC3000)).